The chain runs to 321 residues: Fructose-1,6-bisphosphatase class 1 (321 aa).

Mg(2+) contacts are provided by glutamate 93, aspartate 114, leucine 116, and aspartate 117. Residues 117–120 (DGSS), asparagine 205, tyrosine 233, and lysine 263 contribute to the substrate site. Glutamate 269 contributes to the Mg(2+) binding site.

Belongs to the FBPase class 1 family. Homotetramer. Mg(2+) serves as cofactor.

The protein resides in the cytoplasm. It carries out the reaction beta-D-fructose 1,6-bisphosphate + H2O = beta-D-fructose 6-phosphate + phosphate. It participates in carbohydrate biosynthesis; gluconeogenesis. This chain is Fructose-1,6-bisphosphatase class 1, found in Persephonella marina (strain DSM 14350 / EX-H1).